Consider the following 451-residue polypeptide: Bifunctional protein GlmU (451 aa).

Positions 1–225 are pyrophosphorylase; that stretch reads MLEIIILAAG…EYEVLGVNNR (225 aa). Residues 7–10, Lys-21, Gln-72, 77–78, 99–101, Gly-136, Glu-150, Asn-165, and Asn-223 each bind UDP-N-acetyl-alpha-D-glucosamine; these read LAAG, GT, and YGD. Asp-101 is a Mg(2+) binding site. Asn-223 is a binding site for Mg(2+). A linker region spans residues 226-246; it reads LQQAELERIFQRQVAEELMVA. Positions 247–451 are N-acetyltransferase; that stretch reads GATLLDPARL…IKGWARPVKK (205 aa). Arg-329 and Lys-347 together coordinate UDP-N-acetyl-alpha-D-glucosamine. His-359 (proton acceptor) is an active-site residue. UDP-N-acetyl-alpha-D-glucosamine contacts are provided by Tyr-362 and Asn-373. Acetyl-CoA is bound by residues Ala-376, 382–383, Ser-401, Ala-419, and Arg-436; that span reads NY.

This sequence in the N-terminal section; belongs to the N-acetylglucosamine-1-phosphate uridyltransferase family. The protein in the C-terminal section; belongs to the transferase hexapeptide repeat family. Homotrimer. The cofactor is Mg(2+).

It is found in the cytoplasm. It catalyses the reaction alpha-D-glucosamine 1-phosphate + acetyl-CoA = N-acetyl-alpha-D-glucosamine 1-phosphate + CoA + H(+). The catalysed reaction is N-acetyl-alpha-D-glucosamine 1-phosphate + UTP + H(+) = UDP-N-acetyl-alpha-D-glucosamine + diphosphate. Its pathway is nucleotide-sugar biosynthesis; UDP-N-acetyl-alpha-D-glucosamine biosynthesis; N-acetyl-alpha-D-glucosamine 1-phosphate from alpha-D-glucosamine 6-phosphate (route II): step 2/2. It participates in nucleotide-sugar biosynthesis; UDP-N-acetyl-alpha-D-glucosamine biosynthesis; UDP-N-acetyl-alpha-D-glucosamine from N-acetyl-alpha-D-glucosamine 1-phosphate: step 1/1. It functions in the pathway bacterial outer membrane biogenesis; LPS lipid A biosynthesis. Functionally, catalyzes the last two sequential reactions in the de novo biosynthetic pathway for UDP-N-acetylglucosamine (UDP-GlcNAc). The C-terminal domain catalyzes the transfer of acetyl group from acetyl coenzyme A to glucosamine-1-phosphate (GlcN-1-P) to produce N-acetylglucosamine-1-phosphate (GlcNAc-1-P), which is converted into UDP-GlcNAc by the transfer of uridine 5-monophosphate (from uridine 5-triphosphate), a reaction catalyzed by the N-terminal domain. The chain is Bifunctional protein GlmU from Saccharophagus degradans (strain 2-40 / ATCC 43961 / DSM 17024).